The primary structure comprises 864 residues: DNA mismatch repair protein MutS (864 aa).

Residue 613-620 participates in ATP binding; that stretch reads GPNMGGKS.

The protein belongs to the DNA mismatch repair MutS family.

This protein is involved in the repair of mismatches in DNA. It is possible that it carries out the mismatch recognition step. This protein has a weak ATPase activity. The polypeptide is DNA mismatch repair protein MutS (Actinobacillus pleuropneumoniae serotype 3 (strain JL03)).